Here is a 174-residue protein sequence, read N- to C-terminus: ATP-dependent protease subunit HslV (174 aa).

The active site involves T2. Na(+) is bound by residues G157, C160, and T163.

This sequence belongs to the peptidase T1B family. HslV subfamily. As to quaternary structure, a double ring-shaped homohexamer of HslV is capped on each side by a ring-shaped HslU homohexamer. The assembly of the HslU/HslV complex is dependent on binding of ATP.

The protein localises to the cytoplasm. The catalysed reaction is ATP-dependent cleavage of peptide bonds with broad specificity.. Its activity is regulated as follows. Allosterically activated by HslU binding. In terms of biological role, protease subunit of a proteasome-like degradation complex believed to be a general protein degrading machinery. This chain is ATP-dependent protease subunit HslV, found in Cellvibrio japonicus (strain Ueda107) (Pseudomonas fluorescens subsp. cellulosa).